The chain runs to 172 residues: Adenine phosphoribosyltransferase (172 aa).

Belongs to the purine/pyrimidine phosphoribosyltransferase family. Homodimer.

It is found in the cytoplasm. It carries out the reaction AMP + diphosphate = 5-phospho-alpha-D-ribose 1-diphosphate + adenine. It functions in the pathway purine metabolism; AMP biosynthesis via salvage pathway; AMP from adenine: step 1/1. In terms of biological role, catalyzes a salvage reaction resulting in the formation of AMP, that is energically less costly than de novo synthesis. This Desulforamulus reducens (strain ATCC BAA-1160 / DSM 100696 / MI-1) (Desulfotomaculum reducens) protein is Adenine phosphoribosyltransferase.